The chain runs to 455 residues: Kynurenine 3-monooxygenase (455 aa).

2 consecutive transmembrane segments (helical) span residues Trp393–Tyr416 and Leu429–Arg453.

The protein belongs to the aromatic-ring hydroxylase family. KMO subfamily. The cofactor is FAD.

It is found in the mitochondrion. The protein localises to the membrane. The catalysed reaction is L-kynurenine + NADPH + O2 + H(+) = 3-hydroxy-L-kynurenine + NADP(+) + H2O. It participates in cofactor biosynthesis; NAD(+) biosynthesis; quinolinate from L-kynurenine: step 1/3. Its function is as follows. Catalyzes the hydroxylation of L-kynurenine (L-Kyn) to form 3-hydroxy-L-kynurenine (L-3OHKyn). Required for synthesis of quinolinic acid. The sequence is that of Kynurenine 3-monooxygenase from Drosophila willistoni (Fruit fly).